The following is a 716-amino-acid chain: Fatty acid oxidation complex subunit alpha (716 aa).

Residues 1–189 are enoyl-CoA hydratase/isomerase; the sequence is MIYQSPTIQV…KVGAIDAVVA (189 aa). D296 is a binding site for substrate. The tract at residues 311 to 716 is 3-hydroxyacyl-CoA dehydrogenase; it reads KNIDTAAVLG…AANNGSYYQS (406 aa). Residues M324, D343, 400-402, K407, and S429 contribute to the NAD(+) site; that span reads VVE. The For 3-hydroxyacyl-CoA dehydrogenase activity role is filled by H450. Residue N453 participates in NAD(+) binding. N500 contributes to the substrate binding site.

It in the N-terminal section; belongs to the enoyl-CoA hydratase/isomerase family. This sequence in the C-terminal section; belongs to the 3-hydroxyacyl-CoA dehydrogenase family. Heterotetramer of two alpha chains (FadB) and two beta chains (FadA).

The enzyme catalyses a (3S)-3-hydroxyacyl-CoA + NAD(+) = a 3-oxoacyl-CoA + NADH + H(+). It catalyses the reaction a (3S)-3-hydroxyacyl-CoA = a (2E)-enoyl-CoA + H2O. It carries out the reaction a 4-saturated-(3S)-3-hydroxyacyl-CoA = a (3E)-enoyl-CoA + H2O. The catalysed reaction is (3S)-3-hydroxybutanoyl-CoA = (3R)-3-hydroxybutanoyl-CoA. The enzyme catalyses a (3Z)-enoyl-CoA = a 4-saturated (2E)-enoyl-CoA. It catalyses the reaction a (3E)-enoyl-CoA = a 4-saturated (2E)-enoyl-CoA. It participates in lipid metabolism; fatty acid beta-oxidation. Functionally, involved in the aerobic and anaerobic degradation of long-chain fatty acids via beta-oxidation cycle. Catalyzes the formation of 3-oxoacyl-CoA from enoyl-CoA via L-3-hydroxyacyl-CoA. It can also use D-3-hydroxyacyl-CoA and cis-3-enoyl-CoA as substrate. The polypeptide is Fatty acid oxidation complex subunit alpha (Shewanella sediminis (strain HAW-EB3)).